A 494-amino-acid chain; its full sequence is Ketol-acid reductoisomerase (NADP(+)) (494 aa).

In terms of domain architecture, KARI N-terminal Rossmann spans leucine 14–serine 208. Residues cysteine 45–glutamine 48, arginine 68, arginine 76, serine 78, and aspartate 108–glutamine 110 contribute to the NADP(+) site. Histidine 132 is a catalytic residue. Glycine 158 is a binding site for NADP(+). KARI C-terminal knotted domains are found at residues serine 209 to glutamate 344 and serine 345 to methionine 487. The Mg(2+) site is built by aspartate 217, glutamate 221, glutamate 389, and glutamate 393. Substrate is bound at residue serine 414.

The protein belongs to the ketol-acid reductoisomerase family. It depends on Mg(2+) as a cofactor.

The enzyme catalyses (2R)-2,3-dihydroxy-3-methylbutanoate + NADP(+) = (2S)-2-acetolactate + NADPH + H(+). It carries out the reaction (2R,3R)-2,3-dihydroxy-3-methylpentanoate + NADP(+) = (S)-2-ethyl-2-hydroxy-3-oxobutanoate + NADPH + H(+). It participates in amino-acid biosynthesis; L-isoleucine biosynthesis; L-isoleucine from 2-oxobutanoate: step 2/4. It functions in the pathway amino-acid biosynthesis; L-valine biosynthesis; L-valine from pyruvate: step 2/4. Its function is as follows. Involved in the biosynthesis of branched-chain amino acids (BCAA). Catalyzes an alkyl-migration followed by a ketol-acid reduction of (S)-2-acetolactate (S2AL) to yield (R)-2,3-dihydroxy-isovalerate. In the isomerase reaction, S2AL is rearranged via a Mg-dependent methyl migration to produce 3-hydroxy-3-methyl-2-ketobutyrate (HMKB). In the reductase reaction, this 2-ketoacid undergoes a metal-dependent reduction by NADPH to yield (R)-2,3-dihydroxy-isovalerate. The sequence is that of Ketol-acid reductoisomerase (NADP(+)) from Aliivibrio fischeri (strain ATCC 700601 / ES114) (Vibrio fischeri).